A 512-amino-acid chain; its full sequence is Cytochrome P450 76C1 (512 aa).

Residues 3–23 (IISGQALLLLFCFILSCFLIF) traverse the membrane as a helical segment. Cys-450 lines the heme pocket.

It belongs to the cytochrome P450 family. It depends on heme as a cofactor.

It localises to the membrane. The polypeptide is Cytochrome P450 76C1 (CYP76C1) (Arabidopsis thaliana (Mouse-ear cress)).